The chain runs to 194 residues: Ion-translocating oxidoreductase complex subunit A (194 aa).

6 consecutive transmembrane segments (helical) span residues 1 to 21 (MVMH…FILV), 48 to 68 (CVIV…LIPF), 73 to 93 (LCTM…EIIV), 103 to 123 (LLGI…IPLM), 135 to 155 (VLYG…FSSI), and 172 to 192 (PIAL…DGLI).

The protein belongs to the NqrDE/RnfAE family. As to quaternary structure, the complex is composed of six subunits: RnfA, RnfB, RnfC, RnfD, RnfE and RnfG.

Its subcellular location is the cell inner membrane. Its function is as follows. Part of a membrane-bound complex that couples electron transfer with translocation of ions across the membrane. The protein is Ion-translocating oxidoreductase complex subunit A of Buchnera aphidicola subsp. Baizongia pistaciae (strain Bp).